We begin with the raw amino-acid sequence, 265 residues long: Eukaryotic translation initiation factor 3 subunit J (265 aa).

Disordered regions lie at residues 1–113 and 215–237; these read MPPS…DSDL and SNEK…AAKT. Acidic residues predominate over residues 27 to 45; that stretch reads DEEDGDVLDSWDAADDSEV. A coiled-coil region spans residues 43-95; sequence SEVEREKAAKAAEAKAKAEAEAAANKKSKAQRIAEHKTRRKAAEDEEDDESDE. Over residues 46–62 the composition is skewed to basic and acidic residues; the sequence is EREKAAKAAEAKAKAEA. The segment covering 86–97 has biased composition (acidic residues); it reads EDEEDDESDEDE. Composition is skewed to basic and acidic residues over residues 98–113 and 217–229; these read AEKR…DSDL and EKMK…DKGS.

This sequence belongs to the eIF-3 subunit J family. Component of the eukaryotic translation initiation factor 3 (eIF-3) complex.

The protein localises to the cytoplasm. Functionally, component of the eukaryotic translation initiation factor 3 (eIF-3) complex, which is involved in protein synthesis of a specialized repertoire of mRNAs and, together with other initiation factors, stimulates binding of mRNA and methionyl-tRNAi to the 40S ribosome. The eIF-3 complex specifically targets and initiates translation of a subset of mRNAs involved in cell proliferation. In Emericella nidulans (strain FGSC A4 / ATCC 38163 / CBS 112.46 / NRRL 194 / M139) (Aspergillus nidulans), this protein is Eukaryotic translation initiation factor 3 subunit J (hcr1).